A 395-amino-acid chain; its full sequence is MPNKKTIRDIDLKGKRVLVRVDFNVPIDNQGNIEDDARIRAAIPTIEYLLDAKAIVILMSHLGRPKGFDEKYSLKPVAKRLSRYIHKDVVMAPDCIGKDMENIVKNAKSEDVIMLENLRFHKEEEECDEEFSKKLASLGEVYVSDAFGTCHRKHASVYCVPQILKPACMGFLLEKELLYFEKAMVNPQRPVVAFLGGAKVSSKLNVIKNLLKRVDKMFIGGAMAFTFIKAMRYDTGKSLVENDLIDVAKDIIDISKKLGVKFYLPVDFIVGKELSDNTPIKTVLWQEIPQDYMGLDIGPVSISLAKELIGTAQTIVWNGPMGAFEYERFKDGTLEVARAIAHSQALSIAGGGDTDHAIIRAGVINAIDFVSTGGGAFLELLEGKELPCISVLDDK.

Substrate is bound by residues Asp-22–Asn-24, Arg-38, His-61–Arg-64, Arg-119, and Arg-152. ATP-binding positions include Lys-203, Gly-294, Glu-325, and Gly-351–Thr-354.

Belongs to the phosphoglycerate kinase family. Monomer.

The protein localises to the cytoplasm. The catalysed reaction is (2R)-3-phosphoglycerate + ATP = (2R)-3-phospho-glyceroyl phosphate + ADP. It functions in the pathway carbohydrate degradation; glycolysis; pyruvate from D-glyceraldehyde 3-phosphate: step 2/5. The polypeptide is Phosphoglycerate kinase (Hydrogenobaculum sp. (strain Y04AAS1)).